A 168-amino-acid polypeptide reads, in one-letter code: Small ribosomal subunit protein uS9 (168 aa).

Residues 1 to 15 (MAQNEETTEAVEAEE) show a composition bias toward acidic residues. The disordered stretch occupies residues 1–34 (MAQNEETTEAVEAEETLTSYTSESGAAEAAAPKK).

It belongs to the universal ribosomal protein uS9 family.

This Arthrobacter sp. (strain FB24) protein is Small ribosomal subunit protein uS9.